The sequence spans 81 residues: Photosystem I iron-sulfur center (81 aa).

4Fe-4S ferredoxin-type domains are found at residues 1-31 (MSHT…MVPW) and 37-68 (GQIA…IRVY). Positions 11, 14, 17, 21, 48, 51, 54, and 58 each coordinate [4Fe-4S] cluster.

As to quaternary structure, the cyanobacterial PSI reaction center is composed of one copy each of PsaA,B,C,D,E,F,I,J,K,L,M and X, and forms trimeric complexes. [4Fe-4S] cluster is required as a cofactor.

It localises to the cellular thylakoid membrane. The enzyme catalyses reduced [plastocyanin] + hnu + oxidized [2Fe-2S]-[ferredoxin] = oxidized [plastocyanin] + reduced [2Fe-2S]-[ferredoxin]. Its function is as follows. Apoprotein for the two 4Fe-4S centers FA and FB of photosystem I (PSI); essential for photochemical activity. FB is the terminal electron acceptor of PSI, donating electrons to ferredoxin. The C-terminus interacts with PsaA/B/D and helps assemble the protein into the PSI complex. Required for binding of PsaD and PsaE to PSI. PSI is a plastocyanin/cytochrome c6-ferredoxin oxidoreductase, converting photonic excitation into a charge separation, which transfers an electron from the donor P700 chlorophyll pair to the spectroscopically characterized acceptors A0, A1, FX, FA and FB in turn. This Acaryochloris marina (strain MBIC 11017) protein is Photosystem I iron-sulfur center.